A 59-amino-acid chain; its full sequence is Small, acid-soluble spore protein H 2 (59 aa).

The protein belongs to the SspH family.

Its subcellular location is the spore core. The protein is Small, acid-soluble spore protein H 2 (sspH2) of Bacillus cereus (strain ATCC 14579 / DSM 31 / CCUG 7414 / JCM 2152 / NBRC 15305 / NCIMB 9373 / NCTC 2599 / NRRL B-3711).